The primary structure comprises 112 residues: Cell cycle protein GpsB (112 aa).

A coiled-coil region spans residues 38–72; sequence IKDYEAFHKEFEQLKQQNARLKRELEEQKLVATQV.

The protein belongs to the GpsB family. Forms polymers through the coiled coil domains. Interacts with PBP1, MreC and EzrA.

The protein resides in the cytoplasm. Its function is as follows. Divisome component that associates with the complex late in its assembly, after the Z-ring is formed, and is dependent on DivIC and PBP2B for its recruitment to the divisome. Together with EzrA, is a key component of the system that regulates PBP1 localization during cell cycle progression. Its main role could be the removal of PBP1 from the cell pole after pole maturation is completed. Also contributes to the recruitment of PBP1 to the division complex. Not essential for septum formation. In Bacillus cereus (strain ZK / E33L), this protein is Cell cycle protein GpsB.